The primary structure comprises 344 residues: Protein pelota homolog (344 aa).

This sequence belongs to the eukaryotic release factor 1 family. Pelota subfamily. In terms of assembly, monomer. A divalent metal cation serves as cofactor.

The protein resides in the cytoplasm. In terms of biological role, may function in recognizing stalled ribosomes, interact with stem-loop structures in stalled mRNA molecules, and effect endonucleolytic cleavage of the mRNA. May play a role in the release non-functional ribosomes and degradation of damaged mRNAs. Has endoribonuclease activity. The sequence is that of Protein pelota homolog from Saccharolobus islandicus (strain M.14.25 / Kamchatka #1) (Sulfolobus islandicus).